The primary structure comprises 144 residues: Catabolic 3-dehydroquinase (144 aa).

The active-site Proton acceptor is the Tyr24. Substrate contacts are provided by Asn76, His82, and Asp89. Catalysis depends on His102, which acts as the Proton donor. Residues 103-104 and Arg113 contribute to the substrate site; that span reads IT.

It belongs to the type-II 3-dehydroquinase family. Homododecamer. Adopts a ring-like structure, composed of an arrangement of two hexameric rings stacked on top of one another.

The enzyme catalyses 3-dehydroquinate = 3-dehydroshikimate + H2O. It participates in aromatic compound metabolism; 3,4-dihydroxybenzoate biosynthesis; 3,4-dihydroxybenzoate from 3-dehydroquinate: step 1/2. In terms of biological role, is involved in the catabolism of quinate. Allows the utilization of quinate as carbon source via the beta-ketoadipate pathway. The sequence is that of Catabolic 3-dehydroquinase from Debaryomyces hansenii (strain ATCC 36239 / CBS 767 / BCRC 21394 / JCM 1990 / NBRC 0083 / IGC 2968) (Yeast).